The sequence spans 819 residues: Leucine--tRNA ligase (819 aa).

The short motif at 40-51 is the 'HIGH' region element; it reads PYPSGAGLHVGH. Residues 600–604 carry the 'KMSKS' region motif; it reads KMSKS. Residue K603 participates in ATP binding.

This sequence belongs to the class-I aminoacyl-tRNA synthetase family.

It localises to the cytoplasm. It catalyses the reaction tRNA(Leu) + L-leucine + ATP = L-leucyl-tRNA(Leu) + AMP + diphosphate. This chain is Leucine--tRNA ligase, found in Chlamydia trachomatis serovar A (strain ATCC VR-571B / DSM 19440 / HAR-13).